The primary structure comprises 350 residues: GTPase Obg (350 aa).

The region spanning 1 to 175 (MFVDNIRIFA…GVFFMELRRI (175 aa)) is the Obg domain. The OBG-type G domain maps to 176-345 (ADAGLVGYPN…LRNRLDELVG (170 aa)). GTP is bound by residues 182–189 (GYPNAGKS), 207–211 (FTTLQ), 229–232 (DIPG), 299–302 (NKMD), and 326–328 (SAL). Positions 189 and 209 each coordinate Mg(2+).

It belongs to the TRAFAC class OBG-HflX-like GTPase superfamily. OBG GTPase family. Monomer. Requires Mg(2+) as cofactor.

It localises to the cytoplasm. An essential GTPase which binds GTP, GDP and possibly (p)ppGpp with moderate affinity, with high nucleotide exchange rates and a fairly low GTP hydrolysis rate. Plays a role in control of the cell cycle, stress response, ribosome biogenesis and in those bacteria that undergo differentiation, in morphogenesis control. This is GTPase Obg from Akkermansia muciniphila (strain ATCC BAA-835 / DSM 22959 / JCM 33894 / BCRC 81048 / CCUG 64013 / CIP 107961 / Muc).